A 383-amino-acid polypeptide reads, in one-letter code: MRMMVAGGGTGGHVFPGIALAEEVVTRHPANDVVFVGTARGLEASVVPAAGFPIELIEVKGLKGKGIAGALLNLLLLPRAFLQSWRILRRWRPDVVVGVGGYASGPVVLTAWAMRIPTAVQEQNAIAGLTNRLLGRVVKAAFTAFPEAARHFAARKVYQLGNPIRRRLMENYMRPESAHGQPRLLVFGGSQGAHALNMRVIEALPHLADLRERIQITHQTGARDREYVEKGYRACGFTPDVREFIDDMSAAYAGCDLVVCRAGATTLAELTVCKKPSILVPFPAAADNHQVKNARSLVDAGAAVMIEERDLTGEVLAREIREILDAPERRERMARAAGRLGSPQAAKEIADVCMELVRRRWGSPFGQAREPGQKPARPPDPAS.

Residues 10-12 (TGG), asparagine 124, arginine 165, serine 190, isoleucine 245, and glutamine 290 each bind UDP-N-acetyl-alpha-D-glucosamine. The segment at 363-383 (SPFGQAREPGQKPARPPDPAS) is disordered.

The protein belongs to the glycosyltransferase 28 family. MurG subfamily.

The protein resides in the cell inner membrane. It catalyses the reaction di-trans,octa-cis-undecaprenyl diphospho-N-acetyl-alpha-D-muramoyl-L-alanyl-D-glutamyl-meso-2,6-diaminopimeloyl-D-alanyl-D-alanine + UDP-N-acetyl-alpha-D-glucosamine = di-trans,octa-cis-undecaprenyl diphospho-[N-acetyl-alpha-D-glucosaminyl-(1-&gt;4)]-N-acetyl-alpha-D-muramoyl-L-alanyl-D-glutamyl-meso-2,6-diaminopimeloyl-D-alanyl-D-alanine + UDP + H(+). The protein operates within cell wall biogenesis; peptidoglycan biosynthesis. Cell wall formation. Catalyzes the transfer of a GlcNAc subunit on undecaprenyl-pyrophosphoryl-MurNAc-pentapeptide (lipid intermediate I) to form undecaprenyl-pyrophosphoryl-MurNAc-(pentapeptide)GlcNAc (lipid intermediate II). The chain is UDP-N-acetylglucosamine--N-acetylmuramyl-(pentapeptide) pyrophosphoryl-undecaprenol N-acetylglucosamine transferase from Anaeromyxobacter dehalogenans (strain 2CP-1 / ATCC BAA-258).